Consider the following 210-residue polypeptide: Protein RCR2 (210 aa).

Residues 41-61 (WIFFIFFIVALLILLFSTAKV) traverse the membrane as a helical segment. Positions 125–149 (PNGKTEYLAPPPLSEEQASSTDKDL) are disordered. Phosphoserine is present on Ser-161. Over residues 175–199 (NNFVNGQSNRNEQHSPTVESSSFDV) the composition is skewed to polar residues. The interval 175–210 (NNFVNGQSNRNEQHSPTVESSSFDVNNAPARAKVSK) is disordered. Thr-191 carries the post-translational modification Phosphothreonine.

This sequence to yeast YBR005W.

It localises to the membrane. The protein is Protein RCR2 (RCR2) of Saccharomyces cerevisiae (strain ATCC 204508 / S288c) (Baker's yeast).